Here is a 173-residue protein sequence, read N- to C-terminus: Transcription factor E (173 aa).

Residues 3–86 (DDPLVKSLLT…SWKFEEQEVI (84 aa)) enclose the HTH TFE/IIEalpha-type domain.

It belongs to the TFE family. As to quaternary structure, monomer. Interaction with RNA polymerase subunits RpoF and RpoE is necessary for Tfe stimulatory transcription activity. Able to interact with Tbp and RNA polymerase in the absence of DNA promoter. Interacts both with the preinitiation and elongation complexes.

Its function is as follows. Transcription factor that plays a role in the activation of archaeal genes transcribed by RNA polymerase. Facilitates transcription initiation by enhancing TATA-box recognition by TATA-box-binding protein (Tbp), and transcription factor B (Tfb) and RNA polymerase recruitment. Not absolutely required for transcription in vitro, but particularly important in cases where Tbp or Tfb function is not optimal. It dynamically alters the nucleic acid-binding properties of RNA polymerases by stabilizing the initiation complex and destabilizing elongation complexes. Seems to translocate with the RNA polymerase following initiation and acts by binding to the non template strand of the transcription bubble in elongation complexes. The protein is Transcription factor E of Methanobrevibacter smithii (strain ATCC 35061 / DSM 861 / OCM 144 / PS).